A 550-amino-acid polypeptide reads, in one-letter code: Hydroxylamine reductase (550 aa).

[2Fe-2S] cluster contacts are provided by C3, C6, C18, and C25. Hybrid [4Fe-2O-2S] cluster contacts are provided by H249, E273, C317, C405, C433, C458, E492, and K494. Residue C405 is modified to Cysteine persulfide.

This sequence belongs to the HCP family. Requires [2Fe-2S] cluster as cofactor. It depends on hybrid [4Fe-2O-2S] cluster as a cofactor.

Its subcellular location is the cytoplasm. The catalysed reaction is A + NH4(+) + H2O = hydroxylamine + AH2 + H(+). Its function is as follows. Catalyzes the reduction of hydroxylamine to form NH(3) and H(2)O. The sequence is that of Hydroxylamine reductase from Escherichia coli (strain SMS-3-5 / SECEC).